A 673-amino-acid polypeptide reads, in one-letter code: FLYWCH-type zinc finger-containing protein 1 (673 aa).

The segment at 1 to 62 is disordered; that stretch reads MPLPEPSEQD…SSTATLPNNT (62 aa). Ser-21 is modified (phosphoserine). Residues 47-62 are compositionally biased toward polar residues; sequence VASQETSSTATLPNNT. FLYWCH-type zinc fingers lie at residues 92–150 and 235–293; these read FLKT…DHCH and FLKT…SHCH. A Glycyl lysine isopeptide (Lys-Gly) (interchain with G-Cter in SUMO2) cross-link involves residue Lys-110. The segment covering 147-158 has biased composition (basic and acidic residues); sequence DHCHPPEKEGLD. The segment at 147-178 is disordered; it reads DHCHPPEKEGLDRKKRHRGRPPSSALPEGAEV. Residues Ser-294 and Ser-339 each carry the phosphoserine modification. Residues 351-402 are disordered; that stretch reads LSRSKSKSKSKSRSKSKSKSRSRSRKRAKKQQESSQEPPEEDQDVDPRGPEF. Basic residues predominate over residues 354–379; it reads SKSKSKSKSRSKSKSKSRSRSRKRAK. FLYWCH-type zinc fingers lie at residues 402–460, 490–548, and 581–639; these read FLKT…SHCH, FLKT…RHCH, and FLRT…SHCH. Residues 646-673 form a disordered region; sequence LEALRQREKAPSAAKKKKKKKKKKKGIH. A compositionally biased stretch (basic residues) spans 659-673; the sequence is AKKKKKKKKKKKGIH. Lys-666 is covalently cross-linked (Glycyl lysine isopeptide (Lys-Gly) (interchain with G-Cter in SUMO2)).

As to quaternary structure, interacts with CTNNB1 (when unphosphorylated), perhaps preventing interaction of CTNNB1 with TCF4, and thereby regulating transcription activation; phosphorylation of CTNNB1 may inhibit the interaction.

It is found in the nucleus. The protein localises to the chromosome. It localises to the centromere. Its function is as follows. Transcription cofactor. Negatively regulates transcription activation by catenin beta-1 CTNNB1, perhaps acting by competing with TCF4 for CTNNB1 binding. May play a role in DNA-damage response signaling. Binds specifically to DNA sequences at peri-centromeric chromatin loci. This is FLYWCH-type zinc finger-containing protein 1 (Flywch1) from Mus musculus (Mouse).